Here is a 284-residue protein sequence, read N- to C-terminus: Bifunctional protein FolD (284 aa).

NADP(+) contacts are provided by residues 166-168 (GAS) and isoleucine 232.

Belongs to the tetrahydrofolate dehydrogenase/cyclohydrolase family. As to quaternary structure, homodimer.

It carries out the reaction (6R)-5,10-methylene-5,6,7,8-tetrahydrofolate + NADP(+) = (6R)-5,10-methenyltetrahydrofolate + NADPH. The enzyme catalyses (6R)-5,10-methenyltetrahydrofolate + H2O = (6R)-10-formyltetrahydrofolate + H(+). It functions in the pathway one-carbon metabolism; tetrahydrofolate interconversion. Its function is as follows. Catalyzes the oxidation of 5,10-methylenetetrahydrofolate to 5,10-methenyltetrahydrofolate and then the hydrolysis of 5,10-methenyltetrahydrofolate to 10-formyltetrahydrofolate. This chain is Bifunctional protein FolD, found in Alteromonas mediterranea (strain DSM 17117 / CIP 110805 / LMG 28347 / Deep ecotype).